Consider the following 219-residue polypeptide: Protein YNG1 (219 aa).

The segment at 155–204 adopts a PHD-type; degenerate zinc-finger fold; it reads EVYCFCRNVSYGPMVACDNPACPFEWFHYGCVGLKQAPKGKWYCSKDCKE. Zn(2+) is bound by residues Cys158, Cys160, Cys171, Cys176, His182, Cys185, Cys198, and Cys202.

Belongs to the ING family. Component of the NuA3 histone acetyltransferase (HAT) complex. The NuA3 HAT complex has 2 functionally distinct forms that participate in transcription. The NuA3a HAT complex is composed of at least NTO1, SAS3, TAF14, YNG1 and EAF6. The NuA3b HAT complex contains an additional subunit, PDP3. Interacts with H3K4me3 and to a lesser extent with H3K4me2.

Its subcellular location is the nucleus. In terms of biological role, histone-binding component of the NuA3a histone acetyltransferase complex. Targets the NuA3a HAT complex via histone H3K4me3 to facilitate transcription initiation at promoter regions. SAS3 then acetylates H3K14, leading to transcription initiation at a subset of genes. YNG1 is required for the HAT activity of NuA3 but not for its integrity. Mediates the interaction of SAS3 with nucleosomes. The chain is Protein YNG1 (YNG1) from Saccharomyces cerevisiae (strain ATCC 204508 / S288c) (Baker's yeast).